Consider the following 402-residue polypeptide: Multidrug resistance protein MdtH (402 aa).

At 1–12 (MSRVSQARNLGK) the chain is on the cytoplasmic side. A helical transmembrane segment spans residues 13-33 (YFLLIDNMLVVLGFFVVFPLI). The Periplasmic portion of the chain corresponds to 34–98 (SIRFIDQMGW…GFATMGIAHE (65 aa)). The chain crosses the membrane as a helical span at residues 99–116 (PWLLWFSCFLSGLGGTLF). Over 117–138 (DPPRSALVVKLIRPEQRGRFFS) the chain is Cytoplasmic. Residues 139–159 (LLMMQDSAGAVIGALLGSWLL) traverse the membrane as a helical segment. Over 160-164 (QYDFR) the chain is Periplasmic. Residues 165 to 185 (LVCATGAILFILCALFNAWLL) traverse the membrane as a helical segment. At 186–213 (PAWKLSTVRTPVREGMRRVMSDKRFVTY) the chain is on the cytoplasmic side. The chain crosses the membrane as a helical span at residues 214 to 234 (VLTLAGYYMLAVQVMLMLPIM). The Periplasmic portion of the chain corresponds to 235–243 (VNDIAGSPA). A helical membrane pass occupies residues 244–264 (AVKWMYAIEACLSLTLLYPIA). Residues 265-276 (RWSEKRFRLEHR) are Cytoplasmic-facing. A helical transmembrane segment spans residues 277–297 (LMAGLLVMSLSMIPIGMVGNL). Over 298–299 (QQ) the chain is Periplasmic. Residues 300–320 (LFTLICAFYIGSVIAEPARET) form a helical membrane-spanning segment. Over 321–339 (LSASLADARARGSYMGFSR) the chain is Cytoplasmic. The chain crosses the membrane as a helical span at residues 340-360 (LGLAIGGAIGYIGGGWLFDMG). At 361–367 (KALTQPE) the chain is on the periplasmic side. Residues 368–388 (LPWMMLGIIGFITFLALGWQF) form a helical membrane-spanning segment. Over 389–402 (SHKRTPRRMLEPGA) the chain is Cytoplasmic.

The protein belongs to the major facilitator superfamily. DHA1 family. MdtH (TC 2.A.1.2.21) subfamily.

The protein resides in the cell inner membrane. The protein is Multidrug resistance protein MdtH of Salmonella paratyphi C (strain RKS4594).